The primary structure comprises 227 residues: Transmembrane emp24 domain-containing protein 1 (227 aa).

A signal peptide spans 1-23 (MMAAGTALGLALWLLLPPVGVGG). At 24–194 (AGPPPIQDGE…LQEGNLERVN (171 aa)) the chain is on the extracellular side. One can recognise a GOLD domain in the interval 43–125 (KQCFYQSAPA…EKLVFFELIF (83 aa)). A coiled-coil region spans residues 145-170 (EILEVKMEDIKESIETMRIRLERSIQ). Residues 195-215 (FWSAVNVAVLLLVAVLQVCTL) form a helical membrane-spanning segment. The Cytoplasmic segment spans residues 216–227 (KRFFQDKRPVPM). Residues 218–219 (FF) carry the COPII vesicle coat-binding motif. The short motif at 218-227 (FFQDKRPVPM) is the COPI vesicle coat-binding element.

Belongs to the EMP24/GP25L family. As to quaternary structure, homodimer in endoplasmic reticulum, endoplasmic reticulum-Golgi intermediate compartment and cis-Golgi network. Interacts with IL1RL1. Interacts with RNF26; this interaction is important to modulate innate immune signaling through the cGAS-STING pathway.

It localises to the cell membrane. The protein localises to the endoplasmic reticulum membrane. It is found in the golgi apparatus. The protein resides in the cis-Golgi network membrane. Its subcellular location is the endoplasmic reticulum-Golgi intermediate compartment membrane. Its function is as follows. Potential role in vesicular protein trafficking, mainly in the early secretory pathway. May act as a cargo receptor at the lumenal side for incorporation of secretory cargo molecules into transport vesicles and may be involved in vesicle coat formation at the cytoplasmic side. Plays a positive role in IL-33-mediated IL-8 and IL-6 production by interacting with interleukin-33 receptor IL1RL1. Plays also a role in the modulation of innate immune signaling through the cGAS-STING pathway by interacting with RNF26. The polypeptide is Transmembrane emp24 domain-containing protein 1 (TMED1) (Bos taurus (Bovine)).